A 357-amino-acid chain; its full sequence is Peptide chain release factor 1 (357 aa).

Gln234 is modified (N5-methylglutamine).

It belongs to the prokaryotic/mitochondrial release factor family. Methylated by PrmC. Methylation increases the termination efficiency of RF1.

The protein resides in the cytoplasm. Peptide chain release factor 1 directs the termination of translation in response to the peptide chain termination codons UAG and UAA. The sequence is that of Peptide chain release factor 1 from Lactococcus lactis subsp. cremoris (strain MG1363).